The primary structure comprises 804 residues: Lon protease (804 aa).

The disordered stretch occupies residues 1-23 (MSADSENETSESSPAGEATASTS). A Lon N-terminal domain is found at 30-224 (LILLPVRNAV…KVLDAVAGRI (195 aa)). 376-383 (GPPGVGKT) contacts ATP. One can recognise a Lon proteolytic domain in the interval 612–793 (TSLPGVVTGL…DDAVREIIED (182 aa)). Active-site residues include Ser-699 and Lys-742.

Belongs to the peptidase S16 family. In terms of assembly, homohexamer. Organized in a ring with a central cavity.

The protein localises to the cytoplasm. It carries out the reaction Hydrolysis of proteins in presence of ATP.. Its function is as follows. ATP-dependent serine protease that mediates the selective degradation of mutant and abnormal proteins as well as certain short-lived regulatory proteins. Required for cellular homeostasis and for survival from DNA damage and developmental changes induced by stress. Degrades polypeptides processively to yield small peptide fragments that are 5 to 10 amino acids long. Binds to DNA in a double-stranded, site-specific manner. This chain is Lon protease, found in Paraburkholderia phytofirmans (strain DSM 17436 / LMG 22146 / PsJN) (Burkholderia phytofirmans).